The following is a 145-amino-acid chain: Lysozyme C (145 aa).

Residues 1-19 (MLFFGFLLAFLSAVPGTEG) form the signal peptide. In terms of domain architecture, C-type lysozyme spans 20–145 (EIIPRCELVK…RDLSSYVKGC (126 aa)). Intrachain disulfides connect Cys25-Cys145, Cys49-Cys133, Cys82-Cys98, and Cys94-Cys112. Residues Glu54 and Asp70 contribute to the active site.

The protein belongs to the glycosyl hydrolase 22 family. As to quaternary structure, monomer.

The protein localises to the secreted. It catalyses the reaction Hydrolysis of (1-&gt;4)-beta-linkages between N-acetylmuramic acid and N-acetyl-D-glucosamine residues in a peptidoglycan and between N-acetyl-D-glucosamine residues in chitodextrins.. Lysozymes have primarily a bacteriolytic function; those in tissues and body fluids are associated with the monocyte-macrophage system and enhance the activity of immunoagents. In Opisthocomus hoazin (Hoatzin), this protein is Lysozyme C (LYZ).